Consider the following 430-residue polypeptide: MTASLKAIDGSAELTTLMTDLGRQARAAARILALAPPEQKNRALEAMERAIRAGADKILAANAEDVDDAKAAGTTSAFLDRLTLTPARVEAMAEGIAVVRGIADPVGTVTESWQRPNGMTIERVRVPLGVVAVIFESRPNVAADAGVLCLKSGNAVILRGGSESFRSCRAIHDCLVQGLREAGLPDAAITLVPTRDRAAVGLLLAGLDGSVDVIVPRGGKSLVARVESEARVPVFAHLEGVNHVYVDRSADLEMAKSIVLNAKMRRTGVCGAAETLLIDRAAATTHLAPLVTMLIDSGCEVRGDQTVQKVDPRVKPASDEDWDTEYLDAVIAAKLVDGVDGAIAHIHNHGSHHTDAIVAEDVQAAAKFLGEVDSAIVLHNASTQFADGGEFGFGAEIGIATGKFHARGPVGAEQLTTFKYRIHGSGQTRP.

It belongs to the gamma-glutamyl phosphate reductase family.

The protein resides in the cytoplasm. It carries out the reaction L-glutamate 5-semialdehyde + phosphate + NADP(+) = L-glutamyl 5-phosphate + NADPH + H(+). It participates in amino-acid biosynthesis; L-proline biosynthesis; L-glutamate 5-semialdehyde from L-glutamate: step 2/2. Catalyzes the NADPH-dependent reduction of L-glutamate 5-phosphate into L-glutamate 5-semialdehyde and phosphate. The product spontaneously undergoes cyclization to form 1-pyrroline-5-carboxylate. In Rhodopseudomonas palustris (strain TIE-1), this protein is Gamma-glutamyl phosphate reductase.